A 189-amino-acid polypeptide reads, in one-letter code: UPF0340 protein EF_1967 (189 aa).

It belongs to the UPF0340 family.

In Enterococcus faecalis (strain ATCC 700802 / V583), this protein is UPF0340 protein EF_1967.